Consider the following 459-residue polypeptide: Methylenetetrahydrofolate--tRNA-(uracil-5-)-methyltransferase TrmFO (459 aa).

26–31 (GGGLAG) lines the FAD pocket.

It belongs to the MnmG family. TrmFO subfamily. FAD is required as a cofactor.

It is found in the cytoplasm. The enzyme catalyses uridine(54) in tRNA + (6R)-5,10-methylene-5,6,7,8-tetrahydrofolate + NADH + H(+) = 5-methyluridine(54) in tRNA + (6S)-5,6,7,8-tetrahydrofolate + NAD(+). It catalyses the reaction uridine(54) in tRNA + (6R)-5,10-methylene-5,6,7,8-tetrahydrofolate + NADPH + H(+) = 5-methyluridine(54) in tRNA + (6S)-5,6,7,8-tetrahydrofolate + NADP(+). Functionally, catalyzes the folate-dependent formation of 5-methyl-uridine at position 54 (M-5-U54) in all tRNAs. The sequence is that of Methylenetetrahydrofolate--tRNA-(uracil-5-)-methyltransferase TrmFO from Synechococcus sp. (strain JA-2-3B'a(2-13)) (Cyanobacteria bacterium Yellowstone B-Prime).